Consider the following 1288-residue polypeptide: MPRKGTQPSTARRREEGPPPPSPDGASSDAEPEPPSGRTESPATAAETASEELDNRSLEEILNSIPPPPPPAMTNEAGAPRLMITHIVNQNFKSYAGEKILGPFHKRFSCIIGPNGSGKSNVIDSMLFVFGYRAQKIRSKKLSVLIHNSDEHKDIQSCTVEVHFQKIIDKEGDDYEVIPNSNFYVSRTACRDNTSVYHISGKKKTFKDVGNLLRSHGIDLDHNRFLILQGEVEQIAMMKPKGQTEHDEGMLEYLEDIIGCGRLNEPIKVLCRRVEILNEHRGEKLNRVKMVEKEKDALEGEKNIAIEFLTLENEIFRKKNHVCQYYIYELQKRIAEMETQKEKIHEDTKEINEKSNILSNEMKAKNKDVKDTEKKLNKITKFIEENKEKFTQLDLEDVQVREKLKHATSKAKKLEKQLQKDKEKVEEFKSIPAKSNNIINETTTRNNALEKEKEKEEKKLKEVMDSLKQETQGLQKEKESREKELMGFSKSVNEARSKMDVAQSELDIYLSRHNTAVSQLTKAKEALIAASETLKERKAAIRDIEGKLPQTEQELKEKEKELQKLTQEETNFKSLVHDLFQKVEEAKSSLAMNRSRGKVLDAIIQEKKSGRIPGIYGRLGDLGAIDEKYDVAISSCCHALDYIVVDSIDIAQECVNFLKRQNIGVATFIGLDKMAVWAKKMTEIQTPENTPRLFDLVKVKDEKIRQAFYFALRDTLVADNLDQATRVAYQKDRRWRVVTLQGQIIEQSGTMTGGGSKVMKGRMGSSLVIEISEEEVNKMESQLQNDSKKAMQIQEQKVQLEERVVKLRHSEREMRNTLEKFTASIQRLIEQEEYLNVQVKELEANVLATAPDKKKQKLLEENVSAFKTEYDAVAEKAGKVEAEVKRLHNTIVEINNHKLKAQQDKLDKINKQLDECASAITKAQVAIKTADRNLQKAQDSVLRTEKEIKDTEKEVDDLTAELKSLEDKAAEVVKNTNAAEESLPEIQKEHRNLLQELKVIQENEHALQKDALSIKLKLEQIDGHIAEHNSKIKYWHKEISKISLHPIEDNPIEEISVLSPEDLEAIKNPDSITNQIALLEARCHEMKPNLGAIAEYKKKEELYLQRVAELDKITYERDSFRQAYEDLRKQRLNEFMAGFYIITNKLKENYQMLTLGGDAELELVDSLDPFSEGIMFSVRPPKKSWKKIFNLSGGEKTLSSLALVFALHHYKPTPLYFMDEIDAALDFKNVSIVAFYIYEQTKNAQFIIISLRNNMFEISDRLIGIYKTYNITKSVAVNPKEIASKGLC.

Residues 1–10 (MPRKGTQPST) are compositionally biased toward polar residues. The segment at 1–55 (MPRKGTQPSTARRREEGPPPPSPDGASSDAEPEPPSGRTESPATAAETASEELDN) is disordered. A phosphoserine mark is found at serine 22 and serine 28. Threonine 39 is subject to Phosphothreonine. Low complexity predominate over residues 39-48 (TESPATAAET). Serine 41 and serine 50 each carry phosphoserine. 113 to 120 (GPNGSGKS) lines the ATP pocket. At serine 143 the chain carries Phosphoserine. The stretch at 272–588 (RRVEILNEHR…LFQKVEEAKS (317 aa)) forms a coiled coil. Lysine 381 and lysine 679 each carry N6-acetyllysine. Residues 613 to 727 (PGIYGRLGDL…ADNLDQATRV (115 aa)) form the SMC hinge domain. Positions 767–1020 (LVIEISEEEV…ALSIKLKLEQ (254 aa)) form a coiled coil. A phosphoserine mark is found at serine 982 and serine 1056. The stretch at 1109-1129 (ELDKITYERDSFRQAYEDLRK) forms a coiled coil.

The protein belongs to the SMC family. SMC4 subfamily. Forms a heterodimer with SMC2. Component of the condensin complex, which contains the SMC2 and SMC4 heterodimer, and three non SMC subunits that probably regulate the complex: BRRN1/CAPH, CNAP1/CAPD2 and CAPG. Widely expressed. Higher expression in testis, colon, thymus.

It is found in the nucleus. Its subcellular location is the cytoplasm. The protein localises to the chromosome. Its function is as follows. Central component of the condensin complex, a complex required for conversion of interphase chromatin into mitotic-like condense chromosomes. The condensin complex probably introduces positive supercoils into relaxed DNA in the presence of type I topoisomerases and converts nicked DNA into positive knotted forms in the presence of type II topoisomerases. The chain is Structural maintenance of chromosomes protein 4 (SMC4) from Homo sapiens (Human).